Reading from the N-terminus, the 198-residue chain is MSTSRTAEITRNTNETQIRVAINIDGTGQQKLNTGVPFLDHMLDQIARHGLIDLDIEAKGDLHIDAHHTVEDVGITLGQAFAKAIGDKKGIRRYGHSYVPLDEALSRVVIDFSGRPGLEFHVPFTRSMIGAFDVDLTREFFQGFVNHALVSMHIDNLRGANAHHQCETVFKAFGRALRMAIELDPRSAGTIPSTKGSL.

The protein belongs to the imidazoleglycerol-phosphate dehydratase family.

The protein resides in the cytoplasm. It carries out the reaction D-erythro-1-(imidazol-4-yl)glycerol 3-phosphate = 3-(imidazol-4-yl)-2-oxopropyl phosphate + H2O. It participates in amino-acid biosynthesis; L-histidine biosynthesis; L-histidine from 5-phospho-alpha-D-ribose 1-diphosphate: step 6/9. This Herminiimonas arsenicoxydans protein is Imidazoleglycerol-phosphate dehydratase.